A 277-amino-acid polypeptide reads, in one-letter code: MAATSQVLTAIARRLEGKVALITGGASGIGETTAKLFSQHGAKVAIADVQDELGHSVVEAIGTSNSTYIHCDVTNEDGVKNAVDNTVSTYGKLDIMFSNAGISDPNRPRIIDNEKADFERVFSVNVTGVFLCMKHAARVMIPARSGNIISTASLSSTMGGGSSHAYCGSKHAVLGLTRNLAVELGQFGIRVNCLSPFGLPTALGKKFSGIKNEEEFENVINFAGNLKGPKFNVEDVANAALYLASDEAKYVSGHNLFIDGGFSVCNSVIKVFQYPDS.

Residues 24–29 (GGASGI), D48, V73, and N99 each bind NAD(+). Residue S163 coordinates substrate. Y166 serves as the catalytic Proton donor/acceptor. NAD(+) is bound at residue K170.

Belongs to the short-chain dehydrogenases/reductases (SDR) family. As to quaternary structure, homotetramer.

It catalyses the reaction (-)-secoisolariciresinol + 2 NAD(+) = (-)-matairesinol + 2 NADH + 2 H(+). Its function is as follows. Oxidoreductase involved in lignan biosynthesis. Catalyzes the stereospecific conversion of (-)-secoisolariciresinol to (-)-matairesinol via a lactol intermediate. This is Secoisolariciresinol dehydrogenase from Forsythia intermedia (Border forsythia).